Consider the following 202-residue polypeptide: MERGAGAKLLPLLLLLRATGFTCAQTDGRNGYTAVIEVTSGGPWGDWAWPEMCPDGFFASGFSLKVEPPQGIPGDDTALNGIRLHCARGNVLGNTHVVESQSGSWGEWSEPLWCRGGAYLVAFSLRVEAPTTLGDNTAANNVRFRCSDGEELQGPGLSWGDFGDWSDHCPKGACGLQTKIQGPRGLGDDTALNDARLFCCRS.

Positions Met-1–Ala-24 are cleaved as a signal peptide. Disulfide bonds link Cys-53–Cys-86, Cys-114–Cys-146, Cys-169–Cys-199, and Cys-174–Cys-200.

The protein belongs to the VMO1 family.

It is found in the secreted. This Homo sapiens (Human) protein is Vitelline membrane outer layer protein 1 homolog (VMO1).